Reading from the N-terminus, the 110-residue chain is Thiosulfate sulfurtransferase GlpE (110 aa).

The region spanning 17–105 (KKEGAVVVDI…WRATYPAETA (89 aa)) is the Rhodanese domain. Catalysis depends on C65, which acts as the Cysteine persulfide intermediate.

It belongs to the GlpE family.

Its subcellular location is the cytoplasm. It carries out the reaction thiosulfate + hydrogen cyanide = thiocyanate + sulfite + 2 H(+). It catalyses the reaction thiosulfate + [thioredoxin]-dithiol = [thioredoxin]-disulfide + hydrogen sulfide + sulfite + 2 H(+). Functionally, transferase that catalyzes the transfer of sulfur from thiosulfate to thiophilic acceptors such as cyanide or dithiols. May function in a CysM-independent thiosulfate assimilation pathway by catalyzing the conversion of thiosulfate to sulfite, which can then be used for L-cysteine biosynthesis. The sequence is that of Thiosulfate sulfurtransferase GlpE from Pseudomonas putida (strain ATCC 700007 / DSM 6899 / JCM 31910 / BCRC 17059 / LMG 24140 / F1).